The following is a 419-amino-acid chain: UDP-N-acetylglucosamine 1-carboxyvinyltransferase (419 aa).

22–23 (KN) provides a ligand contact to phosphoenolpyruvate. Arg-91 lines the UDP-N-acetyl-alpha-D-glucosamine pocket. Cys-115 acts as the Proton donor in catalysis. 2-(S-cysteinyl)pyruvic acid O-phosphothioketal is present on Cys-115. UDP-N-acetyl-alpha-D-glucosamine contacts are provided by residues 120-124 (RPVDL), 160-163 (KVSV), Asp-305, and Val-327.

It belongs to the EPSP synthase family. MurA subfamily.

It localises to the cytoplasm. The enzyme catalyses phosphoenolpyruvate + UDP-N-acetyl-alpha-D-glucosamine = UDP-N-acetyl-3-O-(1-carboxyvinyl)-alpha-D-glucosamine + phosphate. It participates in cell wall biogenesis; peptidoglycan biosynthesis. In terms of biological role, cell wall formation. Adds enolpyruvyl to UDP-N-acetylglucosamine. This chain is UDP-N-acetylglucosamine 1-carboxyvinyltransferase, found in Escherichia coli (strain K12 / MC4100 / BW2952).